The sequence spans 366 residues: MLRTEEMILNVGPQHPSTHGVFRLILKIDGEIIQEATPVIGYLHRGTEKIAEGLQYTQIIPYTDRMDYLSAMTNNYVLCHAVETMMGIEVPERAEYLRVLAMELGRIASHLVWWGTYLLDLGATSPFLYAFREREMIINLLNELSGARLTFNYMRIGGVKWDAPDGWIDKVKQFVPYMREKLAGYHDLVTGNEIFRERVTGVGRYTKEEAISYSLSGVNLRSTGVKWDLRKDEPYSVYDRFDFDVPVREGGDCLARYECRMAEIEQSLRIIEQACEQFPADGPIMGKLPRIIKAPPGETFVRIEAPRGEIGCYIASDGKKEPYRLKFRRPSFYNLQILPKLLKGENLANVIAILGSIDIVLGEVDG.

It belongs to the complex I 49 kDa subunit family. As to quaternary structure, NDH-1 is composed of 14 different subunits. Subunits NuoB, C, D, E, F, and G constitute the peripheral sector of the complex.

It localises to the cell membrane. It carries out the reaction a quinone + NADH + 5 H(+)(in) = a quinol + NAD(+) + 4 H(+)(out). Functionally, NDH-1 shuttles electrons from NADH, via FMN and iron-sulfur (Fe-S) centers, to quinones in the respiratory chain. The immediate electron acceptor for the enzyme in this species is believed to be a menaquinone. Couples the redox reaction to proton translocation (for every two electrons transferred, four hydrogen ions are translocated across the cytoplasmic membrane), and thus conserves the redox energy in a proton gradient. The protein is NADH-quinone oxidoreductase subunit D of Geobacillus thermodenitrificans (strain NG80-2).